A 133-amino-acid chain; its full sequence is Capsid protein (133 aa).

It belongs to the Leviviricetes capsid protein family. As to quaternary structure, homodimer. The homodimers binds to the viral RNA via an operator hairpin, but also to many other RNA sequences in the viral genome; this interaction probably shifts the virus from the replicative to the assembly phase and ensures specific encapsidation of the viral genome. Interacts with the maturation protein A2.

The protein resides in the virion. Its function is as follows. Capsid protein self-assembles to form an icosahedral capsid with a T=3 symmetry, about 26 nm in diameter, and consisting of 89 capsid proteins dimers (178 capsid proteins). Involved in viral genome encapsidation through the interaction between a capsid protein dimer and the multiple packaging signals present in the RNA genome. Binding of the capsid proteins to the viral RNA induces a conformational change required for efficient T=3 shell formation. The capsid also contains 1 copy of the A2 maturation protein. Acts as a translational repressor of viral replicase synthesis late in infection. This latter function is the result of capsid protein interaction with an RNA hairpin which contains the replicase ribosome-binding site. This Escherichia virus Qbeta (Bacteriophage Q-beta) protein is Capsid protein.